A 255-amino-acid chain; its full sequence is 4-hydroxy-tetrahydrodipicolinate reductase (255 aa).

NAD(+) contacts are provided by residues 9–14, aspartate 35, 89–91, and 115–118; these read GFKGKM, GTT, and APNF. The active-site Proton donor/acceptor is the histidine 145. Histidine 146 is a (S)-2,3,4,5-tetrahydrodipicolinate binding site. The active-site Proton donor is the lysine 149. Position 155–156 (155–156) interacts with (S)-2,3,4,5-tetrahydrodipicolinate; it reads GT.

The protein belongs to the DapB family.

Its subcellular location is the cytoplasm. It catalyses the reaction (S)-2,3,4,5-tetrahydrodipicolinate + NAD(+) + H2O = (2S,4S)-4-hydroxy-2,3,4,5-tetrahydrodipicolinate + NADH + H(+). The enzyme catalyses (S)-2,3,4,5-tetrahydrodipicolinate + NADP(+) + H2O = (2S,4S)-4-hydroxy-2,3,4,5-tetrahydrodipicolinate + NADPH + H(+). It functions in the pathway amino-acid biosynthesis; L-lysine biosynthesis via DAP pathway; (S)-tetrahydrodipicolinate from L-aspartate: step 4/4. Functionally, catalyzes the conversion of 4-hydroxy-tetrahydrodipicolinate (HTPA) to tetrahydrodipicolinate. This is 4-hydroxy-tetrahydrodipicolinate reductase from Streptococcus pneumoniae (strain P1031).